The sequence spans 1009 residues: Serine/threonine-protein phosphatase BSL2 homolog (1009 aa).

The disordered stretch occupies residues 1–48; that stretch reads MDVDSRMTTESDSDSDAAAQGGGGGGFGSETSSASPSAPGTPTAMGAG. Residues 29–45 are compositionally biased toward low complexity; that stretch reads SETSSASPSAPGTPTAM. Kelch repeat units lie at residues 136–182, 240–288, 293–344, 349–396, and 417–463; these read SSAG…VATA, FLLT…TASA, LLLL…FVNA, SGGA…DAAG, and MIYV…IQAG. Positions 549–572 are disordered; sequence QVNGEAEHSPDREQSPDATPSVKQ. Over residues 553–563 the composition is skewed to basic and acidic residues; sequence EAEHSPDREQS. Residues Asp711, His713, Asp745, and Asn777 each coordinate Mn(2+). His778 acts as the Proton donor in catalysis. Residues His830 and His909 each contribute to the Mn(2+) site. A disordered region spans residues 984–1009; sequence NANRPPTPTRGRPQAANNDRGSLAWI.

Belongs to the PPP phosphatase family. BSU subfamily. It depends on Mn(2+) as a cofactor.

The protein resides in the nucleus. It carries out the reaction O-phospho-L-seryl-[protein] + H2O = L-seryl-[protein] + phosphate. The catalysed reaction is O-phospho-L-threonyl-[protein] + H2O = L-threonyl-[protein] + phosphate. This Oryza sativa subsp. japonica (Rice) protein is Serine/threonine-protein phosphatase BSL2 homolog (BSL2).